Reading from the N-terminus, the 835-residue chain is MGGRVFLAFCVWLTLPGAETQDSRGCARWCPQNSSCVNATACRCNPGFSSFSEIITTPTETCDDINECATPSKVSCGKFSDCWNTEGSYDCVCSPGYEPVSGAKTFKNESENTCQDVDECQQNPRLCKSYGTCVNTLGSYTCQCLPGFKFIPEDPKVCTDVNECTSGQNPCHSSTHCLNNVGSYQCRCRPGWQPIPGSPNGPNNTVCEDVDECSSGQHQCDSSTVCFNTVGSYSCRCRPGWKPRHGIPNNQKDTVCEDMTFSTWTPPPGVHSQTLSRFFDKVQDLGRDSKTSSAEVTIQNVIKLVDELMEAPGDVEALAPPVRHLIATQLLSNLEDIMRILAKSLPKGPFTYISPSNTELTLMIQERGDKNVTMGQSSARMKLNWAVAAGAEDPGPAVAGILSIQNMTTLLANASLNLHSKKQAELEEIYESSIRGVQLRRLSAVNSIFLSHNNTKELNSPILFAFSHLESSDGEAGRDPPAKDVMPGPRQELLCAFWKSDSDRGGHWATEGCQVLGSKNGSTTCQCSHLSSFAILMAHYDVEDWKLTLITRVGLALSLFCLLLCILTFLLVRPIQGSRTTIHLHLCICLFVGSTIFLAGIENEGGQVGLRCRLVAGLLHYCFLAAFCWMSLEGLELYFLVVRVFQGQGLSTRWLCLIGYGVPLLIVGVSAAIYSKGYGRPRYCWLDFEQGFLWSFLGPVTFIILCNAVIFVTTVWKLTQKFSEINPDMKKLKKARALTITAIAQLFLLGCTWVFGLFIFDDRSLVLTYVFTILNCLQGAFLYLLHCLLNKKVREEYRKWACLVAGGSKYSEFTSTTSGTGHNQTRALRASESGI.

The signal sequence occupies residues 1 to 20 (MGGRVFLAFCVWLTLPGAET). Residues 21–552 (QDSRGCARWC…EDWKLTLITR (532 aa)) lie on the Extracellular side of the membrane. The EGF-like 1 domain maps to 22-63 (DSRGCARWCPQNSSCVNATACRCNPGFSSFSEIITTPTETCD). Disulfide bonds link C26/C36, C30/C42, C44/C62, C68/C82, C76/C91, C93/C114, C120/C133, C127/C142, C144/C158, C164/C177, C171/C186, C188/C207, C213/C226, C220/C235, and C237/C256. 2 N-linked (GlcNAc...) asparagine glycosylation sites follow: N33 and N38. The EGF-like 2; calcium-binding domain maps to 64–115 (DINECATPSKVSCGKFSDCWNTEGSYDCVCSPGYEPVSGAKTFKNESENTCQ). N-linked (GlcNAc...) asparagine glycosylation occurs at N108. An EGF-like 3; calcium-binding domain is found at 116–159 (DVDECQQNPRLCKSYGTCVNTLGSYTCQCLPGFKFIPEDPKVCT). In terms of domain architecture, EGF-like 4; calcium-binding spans 160 to 208 (DVNECTSGQNPCHSSTHCLNNVGSYQCRCRPGWQPIPGSPNGPNNTVCE). N-linked (GlcNAc...) asparagine glycosylation is present at N203. In terms of domain architecture, EGF-like 5; calcium-binding spans 209-257 (DVDECSSGQHQCDSSTVCFNTVGSYSCRCRPGWKPRHGIPNNQKDTVCE). The GAIN-B domain occupies 349–543 (PFTYISPSNT…AILMAHYDVE (195 aa)). N371, N406, N413, N453, and N520 each carry an N-linked (GlcNAc...) asparagine glycan. 2 cysteine pairs are disulfide-bonded: C495-C525 and C513-C527. The tract at residues 495–543 (CAFWKSDSDRGGHWATEGCQVLGSKNGSTTCQCSHLSSFAILMAHYDVE) is GPS. A helical membrane pass occupies residues 553-572 (VGLALSLFCLLLCILTFLLV). The Cytoplasmic segment spans residues 573 to 581 (RPIQGSRTT). The helical transmembrane segment at 582-601 (IHLHLCICLFVGSTIFLAGI) threads the bilayer. Residues 602-620 (ENEGGQVGLRCRLVAGLLH) lie on the Extracellular side of the membrane. Residues 621–642 (YCFLAAFCWMSLEGLELYFLVV) traverse the membrane as a helical segment. Residues 643–653 (RVFQGQGLSTR) are Cytoplasmic-facing. A helical transmembrane segment spans residues 654-674 (WLCLIGYGVPLLIVGVSAAIY). Residues 675 to 691 (SKGYGRPRYCWLDFEQG) lie on the Extracellular side of the membrane. Residues 692-712 (FLWSFLGPVTFIILCNAVIFV) traverse the membrane as a helical segment. Topologically, residues 713–739 (TTVWKLTQKFSEINPDMKKLKKARALT) are cytoplasmic. A helical membrane pass occupies residues 740-760 (ITAIAQLFLLGCTWVFGLFIF). Topologically, residues 761–766 (DDRSLV) are extracellular. Residues 767 to 789 (LTYVFTILNCLQGAFLYLLHCLL) form a helical membrane-spanning segment. At 790–835 (NKKVREEYRKWACLVAGGSKYSEFTSTTSGTGHNQTRALRASESGI) the chain is on the cytoplasmic side. The segment covering 814–826 (TSTTSGTGHNQTR) has biased composition (polar residues). The interval 814–835 (TSTTSGTGHNQTRALRASESGI) is disordered. S815 is modified (phosphoserine). T816 is subject to Phosphothreonine. A Phosphoserine modification is found at S818. The residue at position 825 (T825) is a Phosphothreonine. S831 and S833 each carry phosphoserine.

Belongs to the G-protein coupled receptor 2 family. LN-TM7 subfamily. Forms a heterodimer, consisting of a large extracellular region (alpha subunit) non-covalently linked to a seven-transmembrane moiety (beta subunit). Interacts with complement decay-accelerating factor (DAF). The largest isoform (isoform 1) interacts with chondroitin sulfate. Proteolytically cleaved into 2 subunits, an extracellular alpha subunit and a seven-transmembrane subunit. Broadly expressed, found on most hematopoietic cells, including activated lymphocytes, monocytes, macrophages, dendritic cells, and granulocytes. Expressed also abundantly by smooth muscle cells. Expressed in thyroid, colorectal, gastric, esophageal and pancreatic carcinomas too. Expression are increased under inflammatory conditions in the CNS of multiple sclerosis and in synovial tissue of patients with rheumatoid arthritis. Increased expression of CD97 in the synovium is accompanied by detectable levels of soluble CD97 in the synovial fluid.

Its subcellular location is the cell membrane. The protein resides in the secreted. It localises to the extracellular space. Functionally, receptor potentially involved in both adhesion and signaling processes early after leukocyte activation. Plays an essential role in leukocyte migration. This is Adhesion G protein-coupled receptor E5 from Homo sapiens (Human).